Consider the following 600-residue polypeptide: Adenine deaminase 4 (600 aa).

The protein belongs to the metallo-dependent hydrolases superfamily. Adenine deaminase family. The cofactor is Mn(2+).

It carries out the reaction adenine + H2O + H(+) = hypoxanthine + NH4(+). The protein is Adenine deaminase 4 of Rhizobium meliloti (strain 1021) (Ensifer meliloti).